A 150-amino-acid chain; its full sequence is Urease accessory protein UreE (150 aa).

This sequence belongs to the UreE family.

The protein resides in the cytoplasm. Involved in urease metallocenter assembly. Binds nickel. Probably functions as a nickel donor during metallocenter assembly. The protein is Urease accessory protein UreE of Staphylococcus saprophyticus subsp. saprophyticus (strain ATCC 15305 / DSM 20229 / NCIMB 8711 / NCTC 7292 / S-41).